The chain runs to 1348 residues: Putative late blight resistance protein homolog R1B-12 (1348 aa).

2 coiled-coil regions span residues 446 to 469 and 561 to 583; these read RYSD…ESLQ and PRMN…KLLN. The NB-ARC domain maps to 552-848; that stretch reads RTSSQLTRTP…ISESFIKSCE (297 aa). 595–602 provides a ligand contact to ATP; the sequence is GMPGLGKT. LRR repeat units follow at residues 977–1001, 1051–1074, 1123–1147, 1151–1170, 1171–1194, 1197–1219, 1220–1244, and 1309–1332; these read FKFL…LLYL, LRHL…SAKL, PITL…ISAQ, YLKL…TADH, LKHL…EVSN, FPQL…ADDA, FPNL…FMDI, and LPGI…DMDA. One can recognise an HMA domain in the interval 1284-1348; the sequence is VKKMVLKFDT…VGKLINRGML (65 aa).

Belongs to the disease resistance NB-LRR family.

The protein resides in the cytoplasm. The protein localises to the membrane. Confers resistance to late blight (Phytophthora infestans) races carrying the avirulence gene Avr1. Resistance proteins guard the plant against pathogens that contain an appropriate avirulence protein via an indirect interaction with this avirulence protein. That triggers a defense system including the hypersensitive response, which restricts the pathogen growth. The protein is Putative late blight resistance protein homolog R1B-12 (R1B-12) of Solanum demissum (Wild potato).